The chain runs to 497 residues: NADH-ubiquinone oxidoreductase chain 4 (497 aa).

14 consecutive transmembrane segments (helical) span residues 3–23 (FLLYYTLFISFMLWLAALLII), 42–62 (LFFSFFQFILIIFFWILSDNI), 94–114 (ISLLFLLLTFFLTPICILISW), 122–142 (NSFIICLIFITFILFNIFCVL), 144–164 (LVFFYIFFESILIPMFILIGV), 178–198 (LFFYTLLGSLLMLLGILVIYS), 220–240 (ILWASFFFAFCVKVPLFPFHI), 250–270 (PTVGSVILAGVLLKLGTYGLL), 276–296 (IFCDATYFFLPLVYTLCLLGI), 313–333 (IAYASVSHMSFVILGLFTSNI), 340–360 (VFLMLSHGIVSSGLFFCIGCV), 374–394 (GLVSTMPIFSLCLFILILSNI), 418–438 (FAALIATFSIILTAVYSIWLY), and 463–483 (VVGFIFCFITILFGLKGSYII).

This sequence belongs to the complex I subunit 4 family.

The protein resides in the mitochondrion membrane. The enzyme catalyses a ubiquinone + NADH + 5 H(+)(in) = a ubiquinol + NAD(+) + 4 H(+)(out). Core subunit of the mitochondrial membrane respiratory chain NADH dehydrogenase (Complex I) that is believed to belong to the minimal assembly required for catalysis. Complex I functions in the transfer of electrons from NADH to the respiratory chain. The immediate electron acceptor for the enzyme is believed to be ubiquinone. In Acanthamoeba castellanii (Amoeba), this protein is NADH-ubiquinone oxidoreductase chain 4 (ND4).